The primary structure comprises 85 residues: Large ribosomal subunit protein bL27 (85 aa).

A disordered region spans residues Met1–Arg20.

The protein belongs to the bacterial ribosomal protein bL27 family.

The polypeptide is Large ribosomal subunit protein bL27 (Colwellia psychrerythraea (strain 34H / ATCC BAA-681) (Vibrio psychroerythus)).